Reading from the N-terminus, the 423-residue chain is Zinc-type alcohol dehydrogenase-like protein C1198.01 (423 aa).

The disordered stretch occupies residues 14 to 36 (KQLGHREVSEGSTQPKPDPSGAT). Cys74, His97, Cys127, Cys130, Cys133, and Cys141 together coordinate Zn(2+).

The protein belongs to the zinc-containing alcohol dehydrogenase family. Class-III subfamily. The cofactor is Zn(2+).

The protein resides in the golgi apparatus. This chain is Zinc-type alcohol dehydrogenase-like protein C1198.01, found in Schizosaccharomyces pombe (strain 972 / ATCC 24843) (Fission yeast).